Here is a 214-residue protein sequence, read N- to C-terminus: Phosphoheptose isomerase (214 aa).

Residues 51-209 (IASTFEDGGK…IDLVERLLGY (159 aa)) form the SIS domain. 66 to 68 (NGG) contributes to the substrate binding site. Residues H75 and E79 each contribute to the Zn(2+) site. Substrate is bound by residues E79, 110–111 (ND), 136–138 (STS), S141, and Q189. Residues Q189 and H197 each contribute to the Zn(2+) site.

This sequence belongs to the SIS family. GmhA subfamily. Zn(2+) is required as a cofactor.

It localises to the cytoplasm. It carries out the reaction 2 D-sedoheptulose 7-phosphate = D-glycero-alpha-D-manno-heptose 7-phosphate + D-glycero-beta-D-manno-heptose 7-phosphate. Its pathway is carbohydrate biosynthesis; D-glycero-D-manno-heptose 7-phosphate biosynthesis; D-glycero-alpha-D-manno-heptose 7-phosphate and D-glycero-beta-D-manno-heptose 7-phosphate from sedoheptulose 7-phosphate: step 1/1. Catalyzes the isomerization of sedoheptulose 7-phosphate in D-glycero-D-manno-heptose 7-phosphate. The sequence is that of Phosphoheptose isomerase from Chlorobium limicola (strain DSM 245 / NBRC 103803 / 6330).